Consider the following 249-residue polypeptide: Triosephosphate isomerase (249 aa).

Asn9–Lys11 serves as a coordination point for substrate. His95 functions as the Electrophile in the catalytic mechanism. Residue Glu167 is the Proton acceptor of the active site. Substrate is bound by residues Gly173, Ser213, and Gly234–Gly235.

Belongs to the triosephosphate isomerase family. As to quaternary structure, homodimer.

It localises to the cytoplasm. It carries out the reaction D-glyceraldehyde 3-phosphate = dihydroxyacetone phosphate. It participates in carbohydrate biosynthesis; gluconeogenesis. It functions in the pathway carbohydrate degradation; glycolysis; D-glyceraldehyde 3-phosphate from glycerone phosphate: step 1/1. In terms of biological role, involved in the gluconeogenesis. Catalyzes stereospecifically the conversion of dihydroxyacetone phosphate (DHAP) to D-glyceraldehyde-3-phosphate (G3P). The polypeptide is Triosephosphate isomerase (Solibacter usitatus (strain Ellin6076)).